We begin with the raw amino-acid sequence, 259 residues long: Deoxyribose-phosphate aldolase (259 aa).

The Proton donor/acceptor role is filled by aspartate 102. The Schiff-base intermediate with acetaldehyde role is filled by lysine 167. Lysine 201 functions as the Proton donor/acceptor in the catalytic mechanism.

Belongs to the DeoC/FbaB aldolase family. DeoC type 2 subfamily.

The protein resides in the cytoplasm. It carries out the reaction 2-deoxy-D-ribose 5-phosphate = D-glyceraldehyde 3-phosphate + acetaldehyde. It functions in the pathway carbohydrate degradation; 2-deoxy-D-ribose 1-phosphate degradation; D-glyceraldehyde 3-phosphate and acetaldehyde from 2-deoxy-alpha-D-ribose 1-phosphate: step 2/2. Functionally, catalyzes a reversible aldol reaction between acetaldehyde and D-glyceraldehyde 3-phosphate to generate 2-deoxy-D-ribose 5-phosphate. The protein is Deoxyribose-phosphate aldolase of Escherichia fergusonii (strain ATCC 35469 / DSM 13698 / CCUG 18766 / IAM 14443 / JCM 21226 / LMG 7866 / NBRC 102419 / NCTC 12128 / CDC 0568-73).